We begin with the raw amino-acid sequence, 768 residues long: Vacuolar basic amino acid transporter 4 (768 aa).

At 1-252 (MGKKDRQRKK…HDLTRRRIFS (252 aa)) the chain is on the cytoplasmic side. A coiled-coil region spans residues 9-40 (KKLREFAKLKNRQRNLRKSVQTLKNEVQREAK). The disordered stretch occupies residues 34-172 (EVQREAKVPR…ELPVSSSNSF (139 aa)). Residues Ser62, Ser99, and Ser106 each carry the phosphoserine modification. Basic and acidic residues predominate over residues 110–121 (KPADKANEDDLK). Over residues 132–159 (SALQSSITDFSDRSVSPLQSITSCNTPM) the composition is skewed to polar residues. Residues Ser160 and Ser192 each carry the phosphoserine modification. The chain crosses the membrane as a helical span at residues 253–273 (SCMCTYLFFIAMDSSIILVIA). At 274 to 282 (SKIASEFHE) the chain is on the vacuolar side. A helical transmembrane segment spans residues 283–305 (LWRLSLVISAYLLSNAIGQLVFL). Topologically, residues 306–311 (KLSLIS) are cytoplasmic. A helical membrane pass occupies residues 312 to 331 (SVKLLLCIAQFSFILGGYLS). Topologically, residues 332–334 (WSS) are vacuolar. A helical membrane pass occupies residues 335 to 357 (AHFWTFIFARCVTGFGGGSLIAL). Topologically, residues 358 to 375 (KSTIMNRFSQKNDSRYSL) are cytoplasmic. Residues 376-396 (SASMITFAMGVVIGPFMMNLF) form a helical membrane-spanning segment. Topologically, residues 397–406 (DSSHGSGWRN) are vacuolar. The helical transmembrane segment at 407–427 (AFLIPVPFCLVNASIMLADMY) threads the bilayer. Topologically, residues 428 to 447 (SVKSTLYGRPTPTLWKRFKN) are cytoplasmic. A helical membrane pass occupies residues 448–468 (TLLSPDLYEILTLTLFLLCFV). Over 469–481 (QVTSLDLTGLKNN) the chain is Vacuolar. A glycan (N-linked (GlcNAc...) asparagine) is linked at Asn480. The helical transmembrane segment at 482–502 (TMIQALLFSVIIVCGILFFLI) threads the bilayer. The Cytoplasmic segment spans residues 503–522 (ETSDTYMNSVISMSLQGDKR). A helical membrane pass occupies residues 523–543 (LIWTMIGISFCFAALMCIIPF). Over 544 to 562 (GTTYFIIVLNLSTLQLAER) the chain is Vacuolar. Asn553 carries an N-linked (GlcNAc...) asparagine glycan. The chain crosses the membrane as a helical span at residues 563–583 (LSPFFFSIVLGYFSVSYFWKS). Residues 584-587 (KGQN) are Cytoplasmic-facing. Residues 588–608 (FLLKFVLSGATLLLYVALMGV) form a helical membrane-spanning segment. Topologically, residues 609-617 (SLNLPVWKQ) are vacuolar. A helical membrane pass occupies residues 618–638 (YICLSLPFLGSSMILTLLSNL). The Cytoplasmic portion of the chain corresponds to 639 to 653 (YHEYHEQRKSPISGS). Residues 654–674 (IVYCFGAVGGTVGISLGGYVF) form a helical membrane-spanning segment. Over 675 to 734 (HKTLIKLMHEKVMPFSKQGYLKKDLLKIIKHATESSDWVHESAPKFVFQTLIECYLQACR) the chain is Vacuolar. Residues 735-755 (NVFKLSTLFFTITVVAIFIFN) traverse the membrane as a helical segment. The Cytoplasmic portion of the chain corresponds to 756-768 (RIHCRSQNCLSLS).

It belongs to the major facilitator superfamily.

The protein resides in the vacuole membrane. Its function is as follows. Transporter required for vacuolar uptake of basic amino acids. The polypeptide is Vacuolar basic amino acid transporter 4 (VBA4) (Saccharomyces cerevisiae (strain ATCC 204508 / S288c) (Baker's yeast)).